Consider the following 78-residue polypeptide: DNA-directed RNA polymerase subunit omega (78 aa).

This sequence belongs to the RNA polymerase subunit omega family. As to quaternary structure, the RNAP catalytic core consists of 2 alpha, 1 beta, 1 beta' and 1 omega subunit. When a sigma factor is associated with the core the holoenzyme is formed, which can initiate transcription.

It carries out the reaction RNA(n) + a ribonucleoside 5'-triphosphate = RNA(n+1) + diphosphate. Functionally, promotes RNA polymerase assembly. Latches the N- and C-terminal regions of the beta' subunit thereby facilitating its interaction with the beta and alpha subunits. The chain is DNA-directed RNA polymerase subunit omega from Desulfovibrio desulfuricans (strain ATCC 27774 / DSM 6949 / MB).